The sequence spans 265 residues: Glutamate racemase (265 aa).

Substrate contacts are provided by residues 7-8 and 39-40; these read DS and YG. C71 serves as the catalytic Proton donor/acceptor. Substrate is bound at residue 72 to 73; sequence NT. C184 functions as the Proton donor/acceptor in the catalytic mechanism. Residue 185–186 participates in substrate binding; sequence TH.

This sequence belongs to the aspartate/glutamate racemases family.

The enzyme catalyses L-glutamate = D-glutamate. It functions in the pathway cell wall biogenesis; peptidoglycan biosynthesis. Functionally, provides the (R)-glutamate required for cell wall biosynthesis. The protein is Glutamate racemase of Sulfurovum sp. (strain NBC37-1).